The following is a 456-amino-acid chain: UDP-N-acetylmuramate--L-alanine ligase (456 aa).

112–118 (GAHGKTS) lines the ATP pocket.

It belongs to the MurCDEF family.

The protein localises to the cytoplasm. The enzyme catalyses UDP-N-acetyl-alpha-D-muramate + L-alanine + ATP = UDP-N-acetyl-alpha-D-muramoyl-L-alanine + ADP + phosphate + H(+). It functions in the pathway cell wall biogenesis; peptidoglycan biosynthesis. In terms of biological role, cell wall formation. The polypeptide is UDP-N-acetylmuramate--L-alanine ligase (Desulforapulum autotrophicum (strain ATCC 43914 / DSM 3382 / VKM B-1955 / HRM2) (Desulfobacterium autotrophicum)).